The following is a 157-amino-acid chain: MSSAICPCGSGDLLLACCGRYHAGQPAPGAEKLMRSRYSAYVLGLTDYLVQTTLPVQQGGLDREAIAQWSAQSTWLGLEVESSEVFGGKPEHAFVTFTARWHDGNGEHSHRERSSFVQNQGRWYFIDSTVPLKAGRNDACPCGSEQKFKKCCSAYVE.

This sequence belongs to the UPF0225 family.

The polypeptide is UPF0225 protein Psyr_3863 (Pseudomonas syringae pv. syringae (strain B728a)).